Reading from the N-terminus, the 342-residue chain is Succinylglutamate desuccinylase (342 aa).

Zn(2+) is bound by residues H63, E66, and H159. E222 is an active-site residue.

This sequence belongs to the AspA/AstE family. Succinylglutamate desuccinylase subfamily. Requires Zn(2+) as cofactor.

The catalysed reaction is N-succinyl-L-glutamate + H2O = L-glutamate + succinate. The protein operates within amino-acid degradation; L-arginine degradation via AST pathway; L-glutamate and succinate from L-arginine: step 5/5. In terms of biological role, transforms N(2)-succinylglutamate into succinate and glutamate. The chain is Succinylglutamate desuccinylase from Paraburkholderia xenovorans (strain LB400).